A 479-amino-acid chain; its full sequence is Probable phosphatidate cytidylyltransferase (479 aa).

Basic and acidic residues predominate over residues 1–28 (MRTDNIRNRKEQLKKQEKKDFDSSKDEE). Positions 1-71 (MRTDNIRNRK…NNNNNNNNIK (71 aa)) are disordered. Over 1–108 (MRTDNIRNRK…LAIRSVMGAF (108 aa)) the chain is Cytoplasmic. A compositionally biased stretch (low complexity) spans 53 to 69 (NKNIINQKTNNNNNNNN). Residues 109 to 129 (MIGFFTIVLSTDHFIVALFVI) form a helical membrane-spanning segment. Over 130–159 (ALQLLVFKEMIALRYIEAKEKKIPHFRTLN) the chain is Extracellular. A helical transmembrane segment spans residues 160 to 180 (WFFLFTSFFFFYAKPILITLA). Over 181–192 (NYYPDIFQHFVR) the chain is Cytoplasmic. The chain crosses the membrane as a helical span at residues 193–213 (YHLWHSFSLYCIGFVLFILTL). Topologically, residues 214–240 (RKGVYRYQFSQLTWTLMILMMVVVQSN) are extracellular. A helical transmembrane segment spans residues 241–261 (FLISNIYQGLIWFILPVSIIV). At 262–293 (CNDIFAYFNGFFLGKKFINRPLMKISPNKTWE) the chain is on the cytoplasmic side. Residues 294 to 314 (GFIGATGWTLLFAYYFCGFLL) form a helical membrane-spanning segment. At 315–375 (KYDWIVCPKG…FTYIPIQFHA (61 aa)) the chain is on the extracellular side. Residues 376–396 (LVLALFGSLIAPFGGFFASGI) form a helical membrane-spanning segment. Residues 397-479 (KRAYKVKDFD…IEFTTGTITA (83 aa)) lie on the Cytoplasmic side of the membrane.

The protein belongs to the CDS family.

It is found in the membrane. The catalysed reaction is a 1,2-diacyl-sn-glycero-3-phosphate + CTP + H(+) = a CDP-1,2-diacyl-sn-glycerol + diphosphate. It participates in phospholipid metabolism; CDP-diacylglycerol biosynthesis; CDP-diacylglycerol from sn-glycerol 3-phosphate: step 3/3. The chain is Probable phosphatidate cytidylyltransferase (cdsA) from Dictyostelium discoideum (Social amoeba).